Consider the following 356-residue polypeptide: Nucleosome assembly protein 1;4 (356 aa).

Positions 34 to 88 (VNALKNKLQNLAGQHSDILETLTPQVRKRVDVLRELQSQHDELESHFFEERAALE) form a coiled coil. The Nuclear export signal signature appears at 55-70 (LTPQVRKRVDVLRELQ). A Nuclear localization signal motif is present at residues 230 to 235 (KKKPKK). The tract at residues 304–356 (FTGEAAEGDEFEDIEDDDDDDDDDDDEDDEDEEDEDDEEEEKSKKKSSALKVE) is disordered. Positions 309–343 (AEGDEFEDIEDDDDDDDDDDDEDDEDEEDEDDEEE) are enriched in acidic residues. Residues 347-356 (KKKSSALKVE) show a composition bias toward basic residues.

Belongs to the nucleosome assembly protein (NAP) family. In terms of assembly, can form homomeric and heteromeric protein complexes with NAP1;3. Binds histones H2A and H2B in vivo. Also able to bind histones H1 and H4 in vitro. Interacts with CYCB1;1 and with alpha tubulin.

The protein localises to the nucleus. It is found in the cytoplasm. Functionally, may modulate chromatin structure by regulation of nucleosome assembly/disassembly. Could function together with B-type cyclins in the regulation of microtubule dynamics. The polypeptide is Nucleosome assembly protein 1;4 (NAP1;4) (Nicotiana tabacum (Common tobacco)).